Consider the following 808-residue polypeptide: Phospholipase D alpha 1 (808 aa).

One can recognise a C2 domain in the interval Met1–Val125. Asp186 provides a ligand contact to Ca(2+). The region spanning Thr326–Arg364 is the PLD phosphodiesterase 1 domain. Catalysis depends on residues His331, Lys333, and Asp338. A 1,2-diacyl-sn-glycero-3-phosphate is bound at residue His331. His370 and His404 together coordinate Ca(2+). A 1,2-diacyl-sn-glycero-3-phosphate contacts are provided by Gln520 and His659. In terms of domain architecture, PLD phosphodiesterase 2 spans Phe654–Ser681. Active-site residues include His659, Lys661, and Asp666. Residue Glu720 participates in Ca(2+) binding.

Belongs to the phospholipase D family. C2-PLD subfamily. Ca(2+) is required as a cofactor.

The catalysed reaction is a 1,2-diacyl-sn-glycero-3-phosphocholine + H2O = a 1,2-diacyl-sn-glycero-3-phosphate + choline + H(+). Hydrolyzes glycerol-phospholipids at the terminal phosphodiesteric bond. Plays an important role in various cellular processes. The polypeptide is Phospholipase D alpha 1 (Carica papaya (Papaya)).